We begin with the raw amino-acid sequence, 113 residues long: Biotrophy-associated secreted protein 3 (113 aa).

The first 20 residues, 1–20, serve as a signal peptide directing secretion; it reads MQFSTVSFAIFAILPAMVAA.

It localises to the secreted. In terms of biological role, secreted effector involved in biotrophic colonization of plant cells. In Pyricularia oryzae (strain 70-15 / ATCC MYA-4617 / FGSC 8958) (Rice blast fungus), this protein is Biotrophy-associated secreted protein 3.